Here is a 258-residue protein sequence, read N- to C-terminus: Type III pantothenate kinase (258 aa).

Position 12–19 (12–19 (DIGNTSIA)) interacts with ATP. Residues tyrosine 94 and 109 to 112 (GSDV) contribute to the substrate site. Aspartate 111 acts as the Proton acceptor in catalysis. A K(+)-binding site is contributed by aspartate 132. Threonine 135 is a binding site for ATP. Threonine 187 is a substrate binding site.

Belongs to the type III pantothenate kinase family. In terms of assembly, homodimer. It depends on NH4(+) as a cofactor. K(+) serves as cofactor.

It localises to the cytoplasm. It carries out the reaction (R)-pantothenate + ATP = (R)-4'-phosphopantothenate + ADP + H(+). The protein operates within cofactor biosynthesis; coenzyme A biosynthesis; CoA from (R)-pantothenate: step 1/5. Catalyzes the phosphorylation of pantothenate (Pan), the first step in CoA biosynthesis. The protein is Type III pantothenate kinase of Borreliella afzelii (strain PKo) (Borrelia afzelii).